Reading from the N-terminus, the 135-residue chain is Aspartate 1-decarboxylase (135 aa).

The active-site Schiff-base intermediate with substrate; via pyruvic acid is Ser25. Residue Ser25 is modified to Pyruvic acid (Ser). Thr57 is a binding site for substrate. Tyr58 acts as the Proton donor in catalysis. 73–75 (GAA) contributes to the substrate binding site.

This sequence belongs to the PanD family. Heterooctamer of four alpha and four beta subunits. Requires pyruvate as cofactor. In terms of processing, is synthesized initially as an inactive proenzyme, which is activated by self-cleavage at a specific serine bond to produce a beta-subunit with a hydroxyl group at its C-terminus and an alpha-subunit with a pyruvoyl group at its N-terminus.

Its subcellular location is the cytoplasm. It carries out the reaction L-aspartate + H(+) = beta-alanine + CO2. It participates in cofactor biosynthesis; (R)-pantothenate biosynthesis; beta-alanine from L-aspartate: step 1/1. Its function is as follows. Catalyzes the pyruvoyl-dependent decarboxylation of aspartate to produce beta-alanine. This is Aspartate 1-decarboxylase from Mycolicibacterium vanbaalenii (strain DSM 7251 / JCM 13017 / BCRC 16820 / KCTC 9966 / NRRL B-24157 / PYR-1) (Mycobacterium vanbaalenii).